The chain runs to 208 residues: Pectinesterase inhibitor 6 (208 aa).

Residues 1-30 (MTSSSSSPITFTLLLLLSLLVALNPNPSLA) form the signal peptide. The cysteines at positions 53 and 62 are disulfide-linked. Residues N54 and N75 are each glycosylated (N-linked (GlcNAc...) asparagine). A disulfide bond links C118 and C165.

Belongs to the PMEI family.

It localises to the secreted. It is found in the extracellular space. The protein resides in the apoplast. Pectin methylesterase (PME) inhibitor that targets PME from seeds and modulates PME activity and pectin methylesterification during seed germination. Promotes mucilage release by limiting methylesterification of homogalacturonan in seed coat epidermal cells. The polypeptide is Pectinesterase inhibitor 6 (Arabidopsis thaliana (Mouse-ear cress)).